The primary structure comprises 441 residues: uncharacterized protein (441 aa).

78–85 contributes to the ATP binding site; that stretch reads GPRQAGKT.

This is an uncharacterized protein from Mycobacterium bovis (strain ATCC BAA-935 / AF2122/97).